The chain runs to 479 residues: Proline--tRNA ligase (479 aa).

The protein belongs to the class-II aminoacyl-tRNA synthetase family. ProS type 3 subfamily. As to quaternary structure, homodimer.

It is found in the cytoplasm. The catalysed reaction is tRNA(Pro) + L-proline + ATP = L-prolyl-tRNA(Pro) + AMP + diphosphate. Catalyzes the attachment of proline to tRNA(Pro) in a two-step reaction: proline is first activated by ATP to form Pro-AMP and then transferred to the acceptor end of tRNA(Pro). The sequence is that of Proline--tRNA ligase from Mesomycoplasma hyopneumoniae (strain 7448) (Mycoplasma hyopneumoniae).